We begin with the raw amino-acid sequence, 788 residues long: Endonuclease MutS2 (788 aa).

Position 334–341 (334–341 (GPNTGGKT)) interacts with ATP. Residues 713–788 (LDLRGQRYEE…GTGATIVYLQ (76 aa)) enclose the Smr domain.

Belongs to the DNA mismatch repair MutS family. MutS2 subfamily. As to quaternary structure, homodimer. Binds to stalled ribosomes, contacting rRNA.

Functionally, endonuclease that is involved in the suppression of homologous recombination and thus may have a key role in the control of bacterial genetic diversity. Acts as a ribosome collision sensor, splitting the ribosome into its 2 subunits. Detects stalled/collided 70S ribosomes which it binds and splits by an ATP-hydrolysis driven conformational change. Acts upstream of the ribosome quality control system (RQC), a ribosome-associated complex that mediates the extraction of incompletely synthesized nascent chains from stalled ribosomes and their subsequent degradation. Probably generates substrates for RQC. The sequence is that of Endonuclease MutS2 from Lactobacillus johnsonii (strain CNCM I-12250 / La1 / NCC 533).